Here is a 443-residue protein sequence, read N- to C-terminus: Serine/threonine-protein phosphatase 2A 55 kDa regulatory subunit B beta isoform (443 aa).

WD repeat units follow at residues threonine 22–proline 61, glutamate 87–glutamate 128, alanine 171–asparagine 209, glutamate 220–arginine 260, glutamate 279–glutamate 317, glutamate 334–leucine 375, and aspartate 410–asparagine 443.

Belongs to the phosphatase 2A regulatory subunit B family. As to quaternary structure, PP2A consists of a common heterodimeric core enzyme, composed of a 36 kDa catalytic subunit (subunit C) and a 65 kDa constant regulatory subunit (PR65 or subunit A), that associates with a variety of regulatory subunits.

It is found in the cytoplasm. Its subcellular location is the cytoskeleton. The protein localises to the membrane. Its function is as follows. The B regulatory subunit might modulate substrate selectivity and catalytic activity, and might also direct the localization of the catalytic enzyme to a particular subcellular compartment. Negatively controls the initiation of oocyte maturation. The polypeptide is Serine/threonine-protein phosphatase 2A 55 kDa regulatory subunit B beta isoform (ppp2r2b) (Xenopus tropicalis (Western clawed frog)).